The following is a 489-amino-acid chain: Lysine--tRNA ligase (489 aa).

Glutamate 399 and glutamate 406 together coordinate Mg(2+).

Belongs to the class-II aminoacyl-tRNA synthetase family. As to quaternary structure, homodimer. Requires Mg(2+) as cofactor.

It localises to the cytoplasm. It carries out the reaction tRNA(Lys) + L-lysine + ATP = L-lysyl-tRNA(Lys) + AMP + diphosphate. This chain is Lysine--tRNA ligase, found in Roseiflexus sp. (strain RS-1).